The sequence spans 127 residues: Aspartate 1-decarboxylase (127 aa).

Ser-25 acts as the Schiff-base intermediate with substrate; via pyruvic acid in catalysis. The residue at position 25 (Ser-25) is a Pyruvic acid (Ser). Substrate is bound at residue Thr-57. The Proton donor role is filled by Tyr-58. A substrate-binding site is contributed by 73-75 (GAA).

This sequence belongs to the PanD family. In terms of assembly, heterooctamer of four alpha and four beta subunits. It depends on pyruvate as a cofactor. Post-translationally, is synthesized initially as an inactive proenzyme, which is activated by self-cleavage at a specific serine bond to produce a beta-subunit with a hydroxyl group at its C-terminus and an alpha-subunit with a pyruvoyl group at its N-terminus.

The protein resides in the cytoplasm. The enzyme catalyses L-aspartate + H(+) = beta-alanine + CO2. Its pathway is cofactor biosynthesis; (R)-pantothenate biosynthesis; beta-alanine from L-aspartate: step 1/1. In terms of biological role, catalyzes the pyruvoyl-dependent decarboxylation of aspartate to produce beta-alanine. The chain is Aspartate 1-decarboxylase from Bacillus subtilis (strain 168).